The chain runs to 432 residues: Probable imidazolonepropionase (432 aa).

4-imidazolone-5-propanoate contacts are provided by Tyr-159 and His-192. Residue Tyr-159 participates in N-formimidoyl-L-glutamate binding. His-260 contributes to the Fe(3+) binding site. Residue His-260 coordinates Zn(2+). Glu-263 contributes to the 4-imidazolone-5-propanoate binding site. Asp-334 is a Fe(3+) binding site. Asp-334 is a binding site for Zn(2+). Asn-336 contacts N-formimidoyl-L-glutamate.

It belongs to the metallo-dependent hydrolases superfamily. HutI family. Requires Zn(2+) as cofactor. Fe(3+) serves as cofactor.

The catalysed reaction is 4-imidazolone-5-propanoate + H2O = N-formimidoyl-L-glutamate. Its pathway is amino-acid degradation; L-histidine degradation into L-glutamate; N-formimidoyl-L-glutamate from L-histidine: step 3/3. This chain is Probable imidazolonepropionase (amdhd1), found in Xenopus tropicalis (Western clawed frog).